Reading from the N-terminus, the 506-residue chain is ATP synthase subunit alpha, mitochondrial (506 aa).

171–178 (GDRQTGKT) is a binding site for ATP.

The protein belongs to the ATPase alpha/beta chains family. As to quaternary structure, F-type ATPases have 2 components, CF(1) - the catalytic core - and CF(0) - the membrane proton channel. CF(1) has five subunits: alpha(3), beta(3), gamma(1), delta(1), epsilon(1). CF(0) has three main subunits: a, b and c.

The protein localises to the mitochondrion. It localises to the mitochondrion inner membrane. Functionally, mitochondrial membrane ATP synthase (F(1)F(0) ATP synthase or Complex V) produces ATP from ADP in the presence of a proton gradient across the membrane which is generated by electron transport complexes of the respiratory chain. F-type ATPases consist of two structural domains, F(1) - containing the extramembraneous catalytic core, and F(0) - containing the membrane proton channel, linked together by a central stalk and a peripheral stalk. During catalysis, ATP synthesis in the catalytic domain of F(1) is coupled via a rotary mechanism of the central stalk subunits to proton translocation. Subunits alpha and beta form the catalytic core in F(1). Rotation of the central stalk against the surrounding alpha(3)beta(3) subunits leads to hydrolysis of ATP in three separate catalytic sites on the beta subunits. Subunit alpha does not bear the catalytic high-affinity ATP-binding sites. In Beta vulgaris (Sugar beet), this protein is ATP synthase subunit alpha, mitochondrial (ATPA).